The chain runs to 371 residues: Capsular polysaccharide phosphotransferase cps12A (371 aa).

This sequence belongs to the stealth family.

In terms of biological role, part of a capsular polysaccharide synthesis locus. In Actinobacillus pleuropneumoniae (Haemophilus pleuropneumoniae), this protein is Capsular polysaccharide phosphotransferase cps12A (cps12A).